A 254-amino-acid polypeptide reads, in one-letter code: Bidirectional sugar transporter SWEET6b (254 aa).

Topologically, residues Met1 to Asn9 are extracellular. The helical transmembrane segment at Val10–Phe30 threads the bilayer. Residues Val10 to Lys98 form the MtN3/slv 1 domain. The Cytoplasmic segment spans residues Trp31–Asp45. The chain crosses the membrane as a helical span at residues Pro46–His66. Over Pro67–Ser69 the chain is Extracellular. The chain crosses the membrane as a helical span at residues Ile70–Phe90. The Cytoplasmic segment spans residues Phe91–Arg101. A helical membrane pass occupies residues Met102 to Leu122. Residues Gly123–Ser131 lie on the Extracellular side of the membrane. Residues Met132–Ile152 traverse the membrane as a helical segment. A MtN3/slv 2 domain is found at Ile133–Thr216. Residues Met153–Met165 lie on the Cytoplasmic side of the membrane. A helical transmembrane segment spans residues Pro166–Ile186. At Arg187 to Asp189 the chain is on the extracellular side. A helical membrane pass occupies residues Ile190–Tyr210. At Ala211–Arg254 the chain is on the cytoplasmic side.

The protein belongs to the SWEET sugar transporter family. Forms homooligomers and/or heterooligomers.

It is found in the cell membrane. Its function is as follows. Mediates both low-affinity uptake and efflux of sugar across the plasma membrane. This Oryza sativa subsp. indica (Rice) protein is Bidirectional sugar transporter SWEET6b (SWEET6B).